A 181-amino-acid polypeptide reads, in one-letter code: Acireductone dioxygenase (181 aa).

Fe(2+) contacts are provided by H100, H102, E106, and H145. The Ni(2+) site is built by H100, H102, E106, and H145.

The protein belongs to the acireductone dioxygenase (ARD) family. In terms of assembly, monomer. Fe(2+) serves as cofactor. Requires Ni(2+) as cofactor.

It carries out the reaction 1,2-dihydroxy-5-(methylsulfanyl)pent-1-en-3-one + O2 = 3-(methylsulfanyl)propanoate + CO + formate + 2 H(+). The enzyme catalyses 1,2-dihydroxy-5-(methylsulfanyl)pent-1-en-3-one + O2 = 4-methylsulfanyl-2-oxobutanoate + formate + 2 H(+). Its pathway is amino-acid biosynthesis; L-methionine biosynthesis via salvage pathway; L-methionine from S-methyl-5-thio-alpha-D-ribose 1-phosphate: step 5/6. Catalyzes 2 different reactions between oxygen and the acireductone 1,2-dihydroxy-3-keto-5-methylthiopentene (DHK-MTPene) depending upon the metal bound in the active site. Fe-containing acireductone dioxygenase (Fe-ARD) produces formate and 2-keto-4-methylthiobutyrate (KMTB), the alpha-ketoacid precursor of methionine in the methionine recycle pathway. Ni-containing acireductone dioxygenase (Ni-ARD) produces methylthiopropionate, carbon monoxide and formate, and does not lie on the methionine recycle pathway. In Trichodesmium erythraeum (strain IMS101), this protein is Acireductone dioxygenase.